The primary structure comprises 360 residues: CFA/I fimbrial subunit E (360 aa).

The protein resides in the fimbrium. The chain is CFA/I fimbrial subunit E (cfaE) from Escherichia coli.